Reading from the N-terminus, the 285-residue chain is 3-methyl-2-oxobutanoate hydroxymethyltransferase (285 aa).

The tract at residues 1–23 (MSEHNVYGAAQPAQPAQPAQPRT) is disordered. The span at 9–21 (AAQPAQPAQPAQP) shows a compositional bias: low complexity. Mg(2+) is bound by residues aspartate 66 and aspartate 105. Residues 66-67 (DS), aspartate 105, and lysine 135 each bind 3-methyl-2-oxobutanoate. Position 137 (glutamate 137) interacts with Mg(2+). The active-site Proton acceptor is the glutamate 203.

Belongs to the PanB family. In terms of assembly, homodecamer; pentamer of dimers. Mg(2+) is required as a cofactor.

The protein resides in the cytoplasm. It carries out the reaction 3-methyl-2-oxobutanoate + (6R)-5,10-methylene-5,6,7,8-tetrahydrofolate + H2O = 2-dehydropantoate + (6S)-5,6,7,8-tetrahydrofolate. It functions in the pathway cofactor biosynthesis; (R)-pantothenate biosynthesis; (R)-pantoate from 3-methyl-2-oxobutanoate: step 1/2. Functionally, catalyzes the reversible reaction in which hydroxymethyl group from 5,10-methylenetetrahydrofolate is transferred onto alpha-ketoisovalerate to form ketopantoate. The chain is 3-methyl-2-oxobutanoate hydroxymethyltransferase from Mycobacterium avium (strain 104).